The primary structure comprises 65 residues: Large ribosomal subunit protein bL35 (65 aa).

The protein belongs to the bacterial ribosomal protein bL35 family.

The protein is Large ribosomal subunit protein bL35 of Heliobacterium modesticaldum (strain ATCC 51547 / Ice1).